Reading from the N-terminus, the 48-residue chain is Delta-actitoxin-Bcg1b (48 aa).

3 disulfides stabilise this stretch: cysteine 4/cysteine 45, cysteine 6/cysteine 35, and cysteine 28/cysteine 46.

It belongs to the sea anemone sodium channel inhibitory toxin family. Type I subfamily.

The protein localises to the secreted. It is found in the nematocyst. Binds to the sodium channels Nav1.1/SCN1A (EC(50)=165 nM), Nav1.5/SCN5A (EC(50)=103 nM) and Nav1.6/SCN8A (EC(50)=133 nM), thereby delaying their inactivation. Also inhibits Nav1.2/SCN2A, Nav1.3/SCN3A, and Nav1.4/SCN4A, but to a lesser extent. Inhibits Nav1.5 differently from isoforms Nav1.1 and Nav1.6. In Nav1.5 the effect consists in a right-shift of inactivation; whereas in both Nav1.1 and Nav1.6 the effect consists in an incomplete inactivation. The sequence is that of Delta-actitoxin-Bcg1b from Bunodosoma cangicum (Sea anemone).